A 361-amino-acid chain; its full sequence is Chorismate synthase (361 aa).

R48 and R54 together coordinate NADP(+). FMN is bound by residues 125–127, 238–239, G278, 293–297, and R319; these read RSS, NA, and KPTSS.

Belongs to the chorismate synthase family. As to quaternary structure, homotetramer. Requires FMNH2 as cofactor.

The catalysed reaction is 5-O-(1-carboxyvinyl)-3-phosphoshikimate = chorismate + phosphate. It functions in the pathway metabolic intermediate biosynthesis; chorismate biosynthesis; chorismate from D-erythrose 4-phosphate and phosphoenolpyruvate: step 7/7. In terms of biological role, catalyzes the anti-1,4-elimination of the C-3 phosphate and the C-6 proR hydrogen from 5-enolpyruvylshikimate-3-phosphate (EPSP) to yield chorismate, which is the branch point compound that serves as the starting substrate for the three terminal pathways of aromatic amino acid biosynthesis. This reaction introduces a second double bond into the aromatic ring system. The chain is Chorismate synthase from Escherichia coli O7:K1 (strain IAI39 / ExPEC).